Reading from the N-terminus, the 373-residue chain is sn-glycerol-3-phosphate import ATP-binding protein UgpC (373 aa).

The 232-residue stretch at 4–235 (LTLSNITKSY…PASVFVATFI (232 aa)) folds into the ABC transporter domain. 37–44 (GPSGCGKS) contributes to the ATP binding site.

It belongs to the ABC transporter superfamily. sn-glycerol-3-phosphate importer (TC 3.A.1.1.3) family. The complex is composed of two ATP-binding proteins (UgpC), two transmembrane proteins (UgpA and UgpE) and a solute-binding protein (UgpB).

The protein localises to the cell inner membrane. It catalyses the reaction sn-glycerol 3-phosphate(out) + ATP + H2O = sn-glycerol 3-phosphate(in) + ADP + phosphate + H(+). Functionally, part of the ABC transporter complex UgpBAEC involved in sn-glycerol-3-phosphate (G3P) import. Responsible for energy coupling to the transport system. The protein is sn-glycerol-3-phosphate import ATP-binding protein UgpC of Psychromonas ingrahamii (strain DSM 17664 / CCUG 51855 / 37).